The sequence spans 480 residues: Radical SAM Nalpha-GlyT isomerase (480 aa).

The iron-sulfur cluster site is built by C125, C129, and C132. Residues 457–480 (KIVEPTPPEEDGGERKIIPITQID) are disordered.

The enzyme catalyses 5-N(alpha)-glycyl-dTMP in DNA + AH2 + S-adenosyl-L-methionine = 5-C(alpha)-glycyl-dTMP in DNA + 5'-deoxyadenosine + L-methionine + A + H(+). Functionally, isomerizes 5-N-alpha-glycinylthymidine (Nalpha-GlyT) into 5-Calpha-glycinylthymidine (Calpha-GlyT) as a step in the pathway leading to thymidine hypermodifications in the viral genome. As a final result of the pathway of hypermodification, 5-aminoethyl-2'-deoxyuridine (5-NedU) substitutes for about 30% of thymidines in the viral DNA. These modifications probably prevent degradation of viral genome by the host restriction-modification antiviral defense system. The protein is Radical SAM Nalpha-GlyT isomerase of Pseudomonas phage M6.